The primary structure comprises 390 residues: Dual-specificity RNA methyltransferase RlmN (390 aa).

Catalysis depends on Glu-126, which acts as the Proton acceptor. Positions 134 to 374 constitute a Radical SAM core domain; the sequence is TEDRGAVCLS…APVRTPRGQD (241 aa). A disulfide bridge links Cys-141 with Cys-379. [4Fe-4S] cluster contacts are provided by Cys-148, Cys-152, and Cys-155. S-adenosyl-L-methionine contacts are provided by residues 205–206, Ser-237, 259–261, and Asn-336; these read GE and SLH. Cys-379 serves as the catalytic S-methylcysteine intermediate.

It belongs to the radical SAM superfamily. RlmN family. [4Fe-4S] cluster serves as cofactor.

The protein localises to the cytoplasm. It carries out the reaction adenosine(2503) in 23S rRNA + 2 reduced [2Fe-2S]-[ferredoxin] + 2 S-adenosyl-L-methionine = 2-methyladenosine(2503) in 23S rRNA + 5'-deoxyadenosine + L-methionine + 2 oxidized [2Fe-2S]-[ferredoxin] + S-adenosyl-L-homocysteine. The enzyme catalyses adenosine(37) in tRNA + 2 reduced [2Fe-2S]-[ferredoxin] + 2 S-adenosyl-L-methionine = 2-methyladenosine(37) in tRNA + 5'-deoxyadenosine + L-methionine + 2 oxidized [2Fe-2S]-[ferredoxin] + S-adenosyl-L-homocysteine. Functionally, specifically methylates position 2 of adenine 2503 in 23S rRNA and position 2 of adenine 37 in tRNAs. m2A2503 modification seems to play a crucial role in the proofreading step occurring at the peptidyl transferase center and thus would serve to optimize ribosomal fidelity. The protein is Dual-specificity RNA methyltransferase RlmN of Acidiphilium cryptum (strain JF-5).